A 180-amino-acid chain; its full sequence is Adipocyte-related X-chromosome expressed sequence 1 (180 aa).

At methionine 1–leucine 11 the chain is on the cytoplasmic side. Residues phenylalanine 12–phenylalanine 32 traverse the membrane as a helical; Signal-anchor for type II membrane protein segment. Over lysine 33–phenylalanine 180 the chain is Lumenal. The N-linked (GlcNAc...) asparagine glycan is linked to asparagine 141.

It belongs to the SPCS3 family. Strongly expressed in epididymal white and brown adipose tissue with low levels in heart.

The protein localises to the endoplasmic reticulum membrane. In terms of biological role, plays a role in adipogenesis. The chain is Adipocyte-related X-chromosome expressed sequence 1 from Mus musculus (Mouse).